Reading from the N-terminus, the 589-residue chain is Sulfite reductase [NADPH] hemoprotein beta-component (589 aa).

Residues Cys-443, Cys-449, Cys-488, and Cys-492 each coordinate [4Fe-4S] cluster. Cys-492 serves as a coordination point for siroheme.

It belongs to the nitrite and sulfite reductase 4Fe-4S domain family. As to quaternary structure, alpha(8)-beta(8). The alpha component is a flavoprotein, the beta component is a hemoprotein. Siroheme serves as cofactor. [4Fe-4S] cluster is required as a cofactor.

It carries out the reaction hydrogen sulfide + 3 NADP(+) + 3 H2O = sulfite + 3 NADPH + 4 H(+). It participates in sulfur metabolism; hydrogen sulfide biosynthesis; hydrogen sulfide from sulfite (NADPH route): step 1/1. Functionally, component of the sulfite reductase complex that catalyzes the 6-electron reduction of sulfite to sulfide. This is one of several activities required for the biosynthesis of L-cysteine from sulfate. The sequence is that of Sulfite reductase [NADPH] hemoprotein beta-component from Neisseria meningitidis serogroup C (strain 053442).